A 425-amino-acid polypeptide reads, in one-letter code: Histidine--tRNA ligase (425 aa).

The protein belongs to the class-II aminoacyl-tRNA synthetase family. As to quaternary structure, homodimer.

It localises to the cytoplasm. It catalyses the reaction tRNA(His) + L-histidine + ATP = L-histidyl-tRNA(His) + AMP + diphosphate + H(+). This Shewanella oneidensis (strain ATCC 700550 / JCM 31522 / CIP 106686 / LMG 19005 / NCIMB 14063 / MR-1) protein is Histidine--tRNA ligase.